A 344-amino-acid chain; its full sequence is Beta-1,4-galactosyltransferase 4 (344 aa).

At 1–12 (MGCNPPYLLPYR) the chain is on the cytoplasmic side. Residues 13 to 38 (LRLLLFFTLCLTVVGWVTSNYFVDPI) traverse the membrane as a helical; Signal-anchor for type II membrane protein segment. At 39 to 344 (QVIPKAKVFM…NITVDFWTGV (306 aa)) the chain is on the lumenal side. Cysteines 77 and 118 form a disulfide. UDP-alpha-D-galactose-binding positions include 129 to 133 (PHRNR), 168 to 170 (FNR), and 195 to 196 (VD). A disulfide bond links Cys-189 and Cys-208. Asp-196 is a binding site for Mn(2+). N-linked (GlcNAc...) asparagine glycosylation is present at Asn-220. Residues Tyr-224 and Trp-256 each coordinate UDP-alpha-D-galactose. An N-acetyl-D-glucosamine-binding site is contributed by 258–261 (GEDD). His-289 serves as a coordination point for Mn(2+). UDP-alpha-D-galactose is bound at residue 289–291 (HTR). Position 301 (Arg-301) interacts with N-acetyl-D-glucosamine. Asn-335 carries an N-linked (GlcNAc...) asparagine glycan.

The protein belongs to the glycosyltransferase 7 family. Mn(2+) is required as a cofactor.

It is found in the golgi apparatus. It localises to the golgi stack membrane. It carries out the reaction N-acetyl-D-glucosamine + UDP-alpha-D-galactose = beta-D-galactosyl-(1-&gt;4)-N-acetyl-D-glucosamine + UDP + H(+). The enzyme catalyses a beta-D-GlcNAc-(1-&gt;3)-beta-D-Gal-(1-&gt;4)-beta-D-Glc-(1&lt;-&gt;1)-Cer(d18:1(4E)) + UDP-alpha-D-galactose = a neolactoside nLc4Cer(d18:1(4E)) + UDP + H(+). It functions in the pathway protein modification; protein glycosylation. Galactose (Gal) transferase involved in the biosynthesis of glycoproteins, proteoglycans, and glycosyphingolipids. Catalyzes the transfer of Gal residue via a beta1-&gt;4 linkage from UDP-Gal to the non-reducing terminal N-acetyl glucosamine 6-O-sulfate (6-O-sulfoGlcNAc) in the linearly growing chain of both N- and O-linked keratan sulfate proteoglycans. Cooperates with B3GNT7 N-acetyl glucosamine transferase and CHST6 and CHST1 sulfotransferases to construct and elongate mono- and disulfated disaccharide units [-&gt;3Galbeta1-&gt;4(6-sulfoGlcNAcbeta)1-&gt;] and [-&gt;3(6-sulfoGalbeta)1-&gt;4(6-sulfoGlcNAcbeta)1-&gt;] within keratan sulfate polymer. The polypeptide is Beta-1,4-galactosyltransferase 4 (B4GALT4) (Cricetulus griseus (Chinese hamster)).